The chain runs to 501 residues: Lysine--tRNA ligase (501 aa).

Mg(2+) is bound by residues Glu-402 and Glu-409.

This sequence belongs to the class-II aminoacyl-tRNA synthetase family. In terms of assembly, homodimer. It depends on Mg(2+) as a cofactor.

Its subcellular location is the cytoplasm. The enzyme catalyses tRNA(Lys) + L-lysine + ATP = L-lysyl-tRNA(Lys) + AMP + diphosphate. This is Lysine--tRNA ligase from Helicobacter pylori (strain P12).